The chain runs to 511 residues: Aminotransferase FGSG_17085 (511 aa).

Glycine 165–alanine 166 is a binding site for pyridoxal 5'-phosphate. Tyrosine 200 is a binding site for substrate. Aspartate 310 contributes to the pyridoxal 5'-phosphate binding site. Position 339 is an N6-(pyridoxal phosphate)lysine (lysine 339). Glycine 371 contributes to the substrate binding site. Histidine 372–threonine 373 serves as a coordination point for pyridoxal 5'-phosphate.

It belongs to the class-III pyridoxal-phosphate-dependent aminotransferase family. It depends on pyridoxal 5'-phosphate as a cofactor.

It functions in the pathway secondary metabolite biosynthesis. In terms of biological role, aminotransferase; part of the gene cluster that mediates the biosynthesis of the lipopeptide fusaristatin A. Fusaristatin A consists of a polyketide chain linked to three amino acid residues glutamine (Gln), dehydroalanine (dehydro-Ala), and beta-aminoisobutyric acid. The biosynthesis starts with formation of a linear polyketide chain by the highly reducing polyketide synthase PKS6. The gene cluster does not contain an acyl-CoA ligase or an acyl-transferase, and it is therefore predicted that the polyketide is transferred directly to the nonribosomal peptide synthetase NRPS7. Modules 1-3 from NRPS7 incorporate dehydro-Ala, Gln, and beta-aminoisobutyric acid in the compound, which is released by cyclization. The beta-aminoisobutyric acid units are most likely not freely available to the NRPS, but can be synthesized from thymine, which requires a dehydrogenase, a monooxygenase, and an aminotransferase. The fusaristatin A cluster contains a cytochrome P450 monooxygenase (FGSG_08207) and an aminotransferase (FGSG_17085), which theoretically can perform two of the enzymatic steps. The enzymes may however also be involved in biosynthesis of dehydroalanine or modification of the polyketide. The dehydro-Ala residue can be a result of cyclization, where serine is dehydrated. The last gene of the cluster encodes a protein with an A/B barrel domain found in variable enzymes, which hampers functional prediction. The sequence is that of Aminotransferase FGSG_17085 from Gibberella zeae (strain ATCC MYA-4620 / CBS 123657 / FGSC 9075 / NRRL 31084 / PH-1) (Wheat head blight fungus).